A 366-amino-acid chain; its full sequence is Probable S-adenosyl-L-methionine-binding protein AF_0433 (366 aa).

Residues 6–136 (LRQVGVIRSP…YSSTIDSVGN (131 aa)) enclose the TsaA-like domain. S-adenosyl-L-methionine contacts are provided by residues 23-25 (PHQ), 61-62 (DR), Arg-85, and 116-119 (LDGT).

It belongs to the tRNA methyltransferase O family.

This is Probable S-adenosyl-L-methionine-binding protein AF_0433 from Archaeoglobus fulgidus (strain ATCC 49558 / DSM 4304 / JCM 9628 / NBRC 100126 / VC-16).